The chain runs to 76 residues: Sec-independent protein translocase protein TatA (76 aa).

The chain crosses the membrane as a helical span at residues 1–21; that stretch reads MGGISIWQLLIIVAIIVLLFG. The disordered stretch occupies residues 43-76; that stretch reads MADDKSQPQDASFEKVEAKEAASTEQKAKEKEQA.

Belongs to the TatA/E family. In terms of assembly, the Tat system comprises two distinct complexes: a TatABC complex, containing multiple copies of TatA, TatB and TatC subunits, and a separate TatA complex, containing only TatA subunits. Substrates initially bind to the TatABC complex, which probably triggers association of the separate TatA complex to form the active translocon.

The protein localises to the cell inner membrane. In terms of biological role, part of the twin-arginine translocation (Tat) system that transports large folded proteins containing a characteristic twin-arginine motif in their signal peptide across membranes. TatA could form the protein-conducting channel of the Tat system. The polypeptide is Sec-independent protein translocase protein TatA (Actinobacillus pleuropneumoniae serotype 5b (strain L20)).